The chain runs to 78 residues: Small ribosomal subunit protein bS18A (78 aa).

Belongs to the bacterial ribosomal protein bS18 family. Part of the 30S ribosomal subunit. Forms a tight heterodimer with protein bS6.

Functionally, binds as a heterodimer with protein bS6 to the central domain of the 16S rRNA, where it helps stabilize the platform of the 30S subunit. This chain is Small ribosomal subunit protein bS18A, found in Streptomyces avermitilis (strain ATCC 31267 / DSM 46492 / JCM 5070 / NBRC 14893 / NCIMB 12804 / NRRL 8165 / MA-4680).